A 155-amino-acid chain; its full sequence is Ribosome maturation factor RimP (155 aa).

The protein belongs to the RimP family.

The protein resides in the cytoplasm. Its function is as follows. Required for maturation of 30S ribosomal subunits. This is Ribosome maturation factor RimP from Maridesulfovibrio salexigens (strain ATCC 14822 / DSM 2638 / NCIMB 8403 / VKM B-1763) (Desulfovibrio salexigens).